The sequence spans 675 residues: Protein PALS1 (675 aa).

Disordered regions lie at residues 1-32 (MTTS…HPKH) and 52-79 (RSAQ…KQEL). The tract at residues 1–345 (MTTSYMNGHV…QQIKPPPAKE (345 aa)) is required for the correct localization of PALS1 and PATJ at cell-cell contacts and the normal formation of tight junctions and adherens junctions. A phosphoserine mark is found at S14 and S25. The interval 21-140 (LGLASPEEHP…LKHIQHTLVD (120 aa)) is interaction with PARD6B. Over residues 54 to 79 (AQLERIRQQQEDMRRRREEEGKKQEL) the composition is skewed to basic and acidic residues. Phosphoserine is present on residues S83 and S84. L27 domains follow at residues 120–177 (KILE…NKAS) and 179–235 (PFPL…MQLE). An interaction with LIN7C region spans residues 181–243 (PLIANVQDLV…LEPITDERVY (63 aa)). Positions 256–336 (IVRIEKARDI…TLTFVLIPSQ (81 aa)) constitute a PDZ domain. The region spanning 345-417 (ETVIHVKAHF…PGKSFQQQRE (73 aa)) is the SH3 domain. The Guanylate kinase-like domain maps to 479 to 660 (KRPIILIGPQ…AYQELLRLIN (182 aa)). 486 to 493 (GPQNCGQN) lines the ATP pocket.

The protein belongs to the MAGUK family. In terms of assembly, heterodimer with MPP1. Forms a heterotrimeric complex composed of PALS1, LIN7B and PATJ; the N-terminal L27 domain of PALS1 interacts with the L27 domain of PATJ and the C-terminal L27 domain of PALS1 interacts with the L27 domain of LIN7B. Component of a complex composed of PALS1, CRB1 and MPP4. Component of a complex whose core is composed of ARHGAP17, AMOT, PALS1, PATJ and PARD3/PAR3. Component of a complex composed of PALS1, CRB1 and EPB41L5. Within the complex, interacts (via HOOK domain) with EPB41L5 (via FERM domain), and interacts with CRB1 (via intracellular domain). Component of a complex composed of PALS1, MPP3 and CRB1; PALS1 acts as a bridging protein between MPP3 (via guanylate kinase-like domain) and CRB1. Component of a complex composed of CRB3, PALS1 and PATJ. As part of the Crumbs complex; interacts with WWP1, the interaction is enhanced by AMOTL2 and facilitates WWP1 localization to the plasma membrane. The Crumbs complex promotes monoubiquitination of AMOTL2 by WWP1, which activates the Hippo signaling pathway. Interacts (via PDZ domain) with PATJ (via N-terminus). Interacts with EZR. Interacts (via PDZ domain) with CRB1 (via C-terminal ERLI motif). While the PDZ domain is sufficient for interaction with CRB1, the adjacent SH3 and guanylate kinase-like domains are likely to contribute to a high affinity interaction. Interacts with WWTR1/TAZ (via WW domain). Interacts with MPP7. Interacts (via PDZ domain) with CRB3 (via C-terminus). Interacts with LIN7C. Interacts with MPDZ. Interacts with PARD6B. Interacts with SC6A1. Interacts with CDH5; the interaction promotes PALS1 localization to cell junctions and is required for CDH5-mediated vascular lumen formation and endothelial cell. Interacts with NPHP1 (via coiled coil and SH3 domains). Interacts with NPHP4. Interacts with CRB2.

The protein localises to the golgi apparatus. It is found in the cell membrane. The protein resides in the endomembrane system. It localises to the cell junction. Its subcellular location is the tight junction. The protein localises to the adherens junction. It is found in the cell projection. The protein resides in the axon. It localises to the perikaryon. Its subcellular location is the apical cell membrane. Its function is as follows. Plays a role in tight junction biogenesis and in the establishment of cell polarity in epithelial cells. Also involved in adherens junction biogenesis by ensuring correct localization of the exocyst complex protein EXOC4/SEC8 which allows trafficking of adherens junction structural component CDH1 to the cell surface. Plays a role through its interaction with CDH5 in vascular lumen formation and endothelial membrane polarity. Required during embryonic and postnatal retinal development. Required for the maintenance of cerebellar progenitor cells in an undifferentiated proliferative state, preventing premature differentiation, and is required for cerebellar histogenesis, fissure formation, cerebellar layer organization and cortical development. Plays a role in neuronal progenitor cell survival, potentially via promotion of mTOR signaling. Plays a role in the radial and longitudinal extension of the myelin sheath in Schwann cells. May modulate SC6A1/GAT1-mediated GABA uptake by stabilizing the transporter. May play a role in the T-cell receptor-mediated activation of NF-kappa-B. Required for localization of EZR to the apical membrane of parietal cells and may play a role in the dynamic remodeling of the apical cytoskeleton. Required for the normal polarized localization of the vesicular marker STX4. Required for the correct trafficking of the myelin proteins PMP22 and MAG. Involved in promoting phosphorylation and cytoplasmic retention of transcriptional coactivators YAP1 and WWTR1/TAZ which leads to suppression of TGFB1-dependent transcription of target genes such as CCN2/CTGF, SERPINE1/PAI1, SNAI1/SNAIL1 and SMAD7. The protein is Protein PALS1 of Rattus norvegicus (Rat).